A 409-amino-acid chain; its full sequence is Shaggy-related protein kinase NtK-1 (409 aa).

The tract at residues 1-27 (MTSVGLAPVSGLRESSSHSVGVDRLPE) is disordered. The 285-residue stretch at 73-357 (YMAERIVGQG…ALEAVTHAFF (285 aa)) folds into the Protein kinase domain. Residues 79 to 87 (VGQGSFGVV) and Lys-102 contribute to the ATP site. Asp-198 acts as the Proton acceptor in catalysis.

The protein belongs to the protein kinase superfamily. CMGC Ser/Thr protein kinase family. GSK-3 subfamily. Post-translationally, autophosphorylated mainly on threonine and serine residues.

It catalyses the reaction L-seryl-[protein] + ATP = O-phospho-L-seryl-[protein] + ADP + H(+). It carries out the reaction L-threonyl-[protein] + ATP = O-phospho-L-threonyl-[protein] + ADP + H(+). Functionally, may mediate extracellular signals to regulate transcription in differentiating cells. The sequence is that of Shaggy-related protein kinase NtK-1 (NTK-1) from Nicotiana tabacum (Common tobacco).